We begin with the raw amino-acid sequence, 111 residues long: Large ribosomal subunit protein uL22 (111 aa).

It belongs to the universal ribosomal protein uL22 family. As to quaternary structure, part of the 50S ribosomal subunit.

Functionally, this protein binds specifically to 23S rRNA; its binding is stimulated by other ribosomal proteins, e.g. L4, L17, and L20. It is important during the early stages of 50S assembly. It makes multiple contacts with different domains of the 23S rRNA in the assembled 50S subunit and ribosome. In terms of biological role, the globular domain of the protein is located near the polypeptide exit tunnel on the outside of the subunit, while an extended beta-hairpin is found that lines the wall of the exit tunnel in the center of the 70S ribosome. This Polynucleobacter necessarius subsp. necessarius (strain STIR1) protein is Large ribosomal subunit protein uL22.